A 157-amino-acid polypeptide reads, in one-letter code: Cyclic pyranopterin monophosphate synthase (157 aa).

Substrate contacts are provided by residues Met-74–His-76 and Met-112–Glu-113. Residue Asp-127 is part of the active site.

Belongs to the MoaC family. As to quaternary structure, homohexamer; trimer of dimers.

It catalyses the reaction (8S)-3',8-cyclo-7,8-dihydroguanosine 5'-triphosphate = cyclic pyranopterin phosphate + diphosphate. Its pathway is cofactor biosynthesis; molybdopterin biosynthesis. In terms of biological role, catalyzes the conversion of (8S)-3',8-cyclo-7,8-dihydroguanosine 5'-triphosphate to cyclic pyranopterin monophosphate (cPMP). The chain is Cyclic pyranopterin monophosphate synthase from Campylobacter lari (strain RM2100 / D67 / ATCC BAA-1060).